The primary structure comprises 147 residues: Protein PBDC1 homolog (147 aa).

It belongs to the PBDC1 family.

It is found in the cytoplasm. It localises to the nucleus. This is Protein PBDC1 homolog from Schizosaccharomyces pombe (strain 972 / ATCC 24843) (Fission yeast).